A 404-amino-acid polypeptide reads, in one-letter code: MSYTFSTYETLALASLVLLLGYFLVKRINVLKTFNIPEPVVGGFIVAIGLLIWHKIDGTSFNFDKNLQTTMMLVFFTSIGLSANFSRLIKGGKPLVVFLFIAALLIFGQNVIGIASSMALGIHPAYGLLAGSVTLTGGHGTGAAWADTFAHQFNLQGATEIAIACATFGLVFGGIIGGPVARFLLNRQKQGENPENDEVDDIQEAFEHPTYKRKITARSLIETIAMISVCLLIGQYLDVQTKGTALQLPTFVWCLFTGVIVRNILTNIFRFQVAESAIDVLGSVGLSIFLAIALMSLRLWELAGLAIDVLIVLAIQVAFMAAFAIFITYRAMGKDYDAVVLSAGHCGFGLGATPTAIANMQAVTSRFGPSHKAFLIVPMVGAFFIDLINAALLKVSFAVVNILA.

The next 11 helical transmembrane spans lie at 5–25 (FSTY…YFLV), 33–53 (TFNI…LLIW), 69–89 (TTMM…SRLI), 95–115 (LVVF…IGIA), 161–181 (IAIA…GPVA), 219–239 (SLIE…YLDV), 245–265 (ALQL…RNIL), 277–297 (AIDV…LMSL), 307–327 (IDVL…AIFI), 338–358 (AVVL…TAIA), and 373–393 (AFLI…AALL).

The protein belongs to the glutamate:Na(+) symporter (ESS) (TC 2.A.27) family.

It is found in the cell inner membrane. Its function is as follows. Catalyzes the sodium-dependent transport of glutamate. This Haemophilus influenzae (strain ATCC 51907 / DSM 11121 / KW20 / Rd) protein is Sodium/glutamate symporter.